A 312-amino-acid polypeptide reads, in one-letter code: tRNA uridine(34) hydroxylase (312 aa).

Residues 124–218 (SDPEVLLIDT…YLEEVPEQES (95 aa)) enclose the Rhodanese domain. Cysteine 178 (cysteine persulfide intermediate) is an active-site residue. A disordered region spans residues 293–312 (AKARNQPHPIGRNYRLPSEA).

It belongs to the TrhO family.

It catalyses the reaction uridine(34) in tRNA + AH2 + O2 = 5-hydroxyuridine(34) in tRNA + A + H2O. In terms of biological role, catalyzes oxygen-dependent 5-hydroxyuridine (ho5U) modification at position 34 in tRNAs. This chain is tRNA uridine(34) hydroxylase, found in Pseudomonas syringae pv. syringae (strain B728a).